A 268-amino-acid chain; its full sequence is MDLYAVWGNPIVQSKSPLIQNKLATQTHQTIEYIAKLGDLDAFEQQLLAFFEEGAKGCNITSPFKERAYQLADEYSQRAKLAEACNTLKKLDDGKLYADNTDGIGLVTDLERLNWLRPNQRVLILGAGGATKGVLLPLLQAQQNIVLANRTFLKAKELAERFQPYGNIQAASMDSIPLQTYDVVINATSAGLSGGTAPVDAEILKLGSAFYDMQYTKGTDTPFIALCKSLGLTNISDGFGMLVAQAAHSFHLWRGVMPNFVAVYEQLK.

Shikimate contacts are provided by residues 14–16 (SKS) and Thr-61. Lys-65 acts as the Proton acceptor in catalysis. Positions 86 and 102 each coordinate shikimate. Residues 126–130 (GAGGA), 149–154 (NRTFLK), and Met-213 each bind NADP(+). Tyr-215 is a binding site for shikimate. Residue Gly-238 coordinates NADP(+).

The protein belongs to the shikimate dehydrogenase family. In terms of assembly, homodimer.

It catalyses the reaction shikimate + NADP(+) = 3-dehydroshikimate + NADPH + H(+). It functions in the pathway metabolic intermediate biosynthesis; chorismate biosynthesis; chorismate from D-erythrose 4-phosphate and phosphoenolpyruvate: step 4/7. In terms of biological role, involved in the biosynthesis of the chorismate, which leads to the biosynthesis of aromatic amino acids. Catalyzes the reversible NADPH linked reduction of 3-dehydroshikimate (DHSA) to yield shikimate (SA). This chain is Shikimate dehydrogenase (NADP(+)), found in Haemophilus influenzae (strain PittGG).